Consider the following 148-residue polypeptide: Large ribosomal subunit protein bL9 (148 aa).

The protein belongs to the bacterial ribosomal protein bL9 family.

Binds to the 23S rRNA. This is Large ribosomal subunit protein bL9 from Aeromonas salmonicida (strain A449).